The chain runs to 261 residues: Cytochrome c oxidase subunit 3 (261 aa).

Topologically, residues Met-1–Pro-15 are mitochondrial matrix. The helical transmembrane segment at Trp-16–Trp-34 threads the bilayer. The Mitochondrial intermembrane segment spans residues Phe-35 to Met-40. A helical membrane pass occupies residues Thr-41–Thr-66. The Mitochondrial matrix segment spans residues Tyr-67–Thr-72. A helical transmembrane segment spans residues Pro-73–Ser-105. Over Leu-106–Glu-128 the chain is Mitochondrial intermembrane. The chain crosses the membrane as a helical span at residues Val-129–Met-152. The Mitochondrial matrix portion of the chain corresponds to Glu-153 to Asn-155. Residues Arg-156–Glu-183 traverse the membrane as a helical segment. Residues Ser-184 to Asp-190 lie on the Mitochondrial intermembrane side of the membrane. Residues Gly-191–Leu-223 form a helical membrane-spanning segment. Residues Met-224–His-232 lie on the Mitochondrial matrix side of the membrane. The chain crosses the membrane as a helical span at residues Phe-233–Ile-256. Topologically, residues Tyr-257–Ser-261 are mitochondrial intermembrane.

It belongs to the cytochrome c oxidase subunit 3 family. As to quaternary structure, component of the cytochrome c oxidase (complex IV, CIV), a multisubunit enzyme composed of 14 subunits. The complex is composed of a catalytic core of 3 subunits MT-CO1, MT-CO2 and MT-CO3, encoded in the mitochondrial DNA, and 11 supernumerary subunits COX4I1 (or COX4I2), COX5A, COX5B, COX6A1 (or COX6A2), COX6B1 (or COX6B2), COX6C, COX7A2 (or COX7A1), COX7B, COX7C, COX8A and NDUFA4, which are encoded in the nuclear genome. The complex exists as a monomer or a dimer and forms supercomplexes (SCs) in the inner mitochondrial membrane with NADH-ubiquinone oxidoreductase (complex I, CI) and ubiquinol-cytochrome c oxidoreductase (cytochrome b-c1 complex, complex III, CIII), resulting in different assemblies (supercomplex SCI(1)III(2)IV(1) and megacomplex MCI(2)III(2)IV(2)).

It is found in the mitochondrion inner membrane. It catalyses the reaction 4 Fe(II)-[cytochrome c] + O2 + 8 H(+)(in) = 4 Fe(III)-[cytochrome c] + 2 H2O + 4 H(+)(out). Component of the cytochrome c oxidase, the last enzyme in the mitochondrial electron transport chain which drives oxidative phosphorylation. The respiratory chain contains 3 multisubunit complexes succinate dehydrogenase (complex II, CII), ubiquinol-cytochrome c oxidoreductase (cytochrome b-c1 complex, complex III, CIII) and cytochrome c oxidase (complex IV, CIV), that cooperate to transfer electrons derived from NADH and succinate to molecular oxygen, creating an electrochemical gradient over the inner membrane that drives transmembrane transport and the ATP synthase. Cytochrome c oxidase is the component of the respiratory chain that catalyzes the reduction of oxygen to water. Electrons originating from reduced cytochrome c in the intermembrane space (IMS) are transferred via the dinuclear copper A center (CU(A)) of subunit 2 and heme A of subunit 1 to the active site in subunit 1, a binuclear center (BNC) formed by heme A3 and copper B (CU(B)). The BNC reduces molecular oxygen to 2 water molecules using 4 electrons from cytochrome c in the IMS and 4 protons from the mitochondrial matrix. This Homo sapiens (Human) protein is Cytochrome c oxidase subunit 3 (MT-CO3).